The following is a 357-amino-acid chain: Cell division control protein 10 (357 aa).

Residues 34-306 (RGFQFNIMVV…ETFRSKQLIA (273 aa)) form the Septin-type G domain. Residues 44–51 (GRSGLGKS) form a G1 motif region. GTP is bound by residues 44–51 (GRSGLGKS), Thr-78, Gly-104, 184–192 (KSDSLTLDE), Gly-240, and Arg-255. The tract at residues 101–104 (DTPG) is G3 motif. The interval 183–186 (AKSD) is G4 motif. Residues 310–357 (NASNPNRQSQLQKDQGQTSQQSNQDLKNTSGVPNAPMFQSTTGTAAAR) form a disordered region.

The protein belongs to the TRAFAC class TrmE-Era-EngA-EngB-Septin-like GTPase superfamily. Septin GTPase family.

It is found in the bud neck. Plays a role in the cell cycle. Involved in the formation of the ring of filaments in the neck region at the mother-bud junction during mitosis. The protein is Cell division control protein 10 (CDC10) of Candida albicans (strain SC5314 / ATCC MYA-2876) (Yeast).